A 414-amino-acid chain; its full sequence is Serine/threonine transporter SstT (414 aa).

Residues 2 to 15 (TTQHSPGLFRRLAH) are Cytoplasmic-facing. Residues 16–36 (GSLVKQILAGLILGILLAWIS) traverse the membrane as a helical segment. The Periplasmic portion of the chain corresponds to 37 to 45 (KPAAEAVGL). The helical transmembrane segment at 46–66 (LGTLFVGALKAVAPILVLMLV) threads the bilayer. Residues 67-83 (MASIANHQHGQKTNIRP) lie on the Cytoplasmic side of the membrane. A helical membrane pass occupies residues 84-104 (ILFLYLLGTFSAALAAVIFSF). The Periplasmic portion of the chain corresponds to 105–142 (AFPSTLHLSSSAGDISPPSGIVEVMRGLVMSMVSNPID). Residues 143-163 (ALLKGNYIGILVWAIGLGFAL) traverse the membrane as a helical segment. Topologically, residues 164–179 (RHGNETTKNLVNDMSN) are cytoplasmic. Residues 180-200 (AVTFMVKLVIHFAPIGIFGLV) traverse the membrane as a helical segment. The Periplasmic portion of the chain corresponds to 201–217 (SSTLATTGFSTLWGYAQ). Residues 218 to 238 (LLVVLVGCMLLVALVVNPLLV) traverse the membrane as a helical segment. Residues 239–299 (WWKIRRNPFP…VSIPLGATIN (61 aa)) lie on the Cytoplasmic side of the membrane. A helical membrane pass occupies residues 300-320 (MAGAAITITVLTLAAVNTLGI). Over 321–331 (PVDLPTALLLS) the chain is Periplasmic. A helical membrane pass occupies residues 332 to 352 (VVASLCACGASGVAGGSLLLI). The Cytoplasmic portion of the chain corresponds to 353-414 (PLACNMFGIS…DRLANSALRN (62 aa)).

This sequence belongs to the dicarboxylate/amino acid:cation symporter (DAACS) (TC 2.A.23) family.

The protein resides in the cell inner membrane. It catalyses the reaction L-serine(in) + Na(+)(in) = L-serine(out) + Na(+)(out). The enzyme catalyses L-threonine(in) + Na(+)(in) = L-threonine(out) + Na(+)(out). In terms of biological role, involved in the import of serine and threonine into the cell, with the concomitant import of sodium (symport system). The polypeptide is Serine/threonine transporter SstT (Escherichia coli (strain UTI89 / UPEC)).